A 399-amino-acid chain; its full sequence is Probable F-box protein At4g22060 (399 aa).

The F-box domain occupies S12–R48.

The protein is Probable F-box protein At4g22060 of Arabidopsis thaliana (Mouse-ear cress).